The following is a 212-amino-acid chain: Translation initiation factor IF-3 (212 aa).

Residues 171 to 212 (PKSASKKGHTPPKTQVEASKQANESAETEEEKKRCHPTKPVL) are disordered. A compositionally biased stretch (polar residues) spans 182-195 (PKTQVEASKQANES).

This sequence belongs to the IF-3 family. Monomer.

Its subcellular location is the cytoplasm. Its function is as follows. IF-3 binds to the 30S ribosomal subunit and shifts the equilibrium between 70S ribosomes and their 50S and 30S subunits in favor of the free subunits, thus enhancing the availability of 30S subunits on which protein synthesis initiation begins. This is Translation initiation factor IF-3 from Porphyromonas gingivalis (strain ATCC 33277 / DSM 20709 / CIP 103683 / JCM 12257 / NCTC 11834 / 2561).